The chain runs to 173 residues: Thiol-disulfide oxidoreductase ResA (173 aa).

A helical; Signal-anchor for type II membrane protein transmembrane segment spans residues Val10–Phe29. Residues Met35–Pro173 form the Thioredoxin domain. A disulfide bond links Cys73 and Cys76.

The protein belongs to the thioredoxin family. ResA subfamily.

It is found in the cell membrane. It participates in protein modification; cytochrome c assembly. Functionally, thiol-disulfide oxidoreductase which is required in disulfide reduction during c-type cytochrome synthesis. May accept reducing equivalents from CcdA, leading to breakage of disulfide bonds in apocytochrome c; following this reduction heme can be covalently attached. The sequence is that of Thiol-disulfide oxidoreductase ResA from Bacillus cereus (strain ZK / E33L).